Reading from the N-terminus, the 217-residue chain is Uracil-DNA glycosylase (217 aa).

The active-site Proton acceptor is the Asp62.

It belongs to the uracil-DNA glycosylase (UDG) superfamily. UNG family.

It localises to the cytoplasm. It catalyses the reaction Hydrolyzes single-stranded DNA or mismatched double-stranded DNA and polynucleotides, releasing free uracil.. Its function is as follows. Excises uracil residues from the DNA which can arise as a result of misincorporation of dUMP residues by DNA polymerase or due to deamination of cytosine. This is Uracil-DNA glycosylase from Streptococcus equi subsp. zooepidemicus (strain MGCS10565).